The following is a 225-amino-acid chain: Protein-L-isoaspartate O-methyltransferase (225 aa).

Residue Ser-75 is part of the active site.

It belongs to the methyltransferase superfamily. L-isoaspartyl/D-aspartyl protein methyltransferase family.

The protein localises to the cytoplasm. The catalysed reaction is [protein]-L-isoaspartate + S-adenosyl-L-methionine = [protein]-L-isoaspartate alpha-methyl ester + S-adenosyl-L-homocysteine. Its function is as follows. Catalyzes the methyl esterification of L-isoaspartyl residues in peptides and proteins that result from spontaneous decomposition of normal L-aspartyl and L-asparaginyl residues. It plays a role in the repair and/or degradation of damaged proteins. The protein is Protein-L-isoaspartate O-methyltransferase of Xanthomonas oryzae pv. oryzae (strain PXO99A).